A 365-amino-acid polypeptide reads, in one-letter code: NAC domain-containing protein 37 (365 aa).

Positions 9 to 158 (VPPGFRFHPT…GWVVCRAFKK (150 aa)) constitute an NAC domain. Residues 109-164 (IGMRKTLVFYKGRAPNGKKSDWIMHEYRLESDENAPPQEEGWVVCRAFKKRATGQA) mediate DNA binding.

It belongs to the plant vascular related NAC-domain protein family. As to quaternary structure, interacts with NAC030/VND7. As to expression, expressed in root metaxylem pole and in shoot pre-procambium and procambium. Present in root developing xylems. Specifically expressed in vessels but not in interfascicular fibers in stems.

It is found in the nucleus. In terms of biological role, transcription activator that binds to the secondary wall NAC binding element (SNBE), 5'-(T/A)NN(C/T)(T/C/G)TNNNNNNNA(A/C)GN(A/C/T)(A/T)-3', in the promoter of target genes. Involved in xylem formation by promoting the expression of secondary wall-associated transcription factors and of genes involved in secondary wall biosynthesis and programmed cell death, genes driven by the secondary wall NAC binding element (SNBE). Triggers thickening of secondary walls. In Arabidopsis thaliana (Mouse-ear cress), this protein is NAC domain-containing protein 37.